The chain runs to 352 residues: Palmitoyltransferase PFA5 (352 aa).

2 consecutive transmembrane segments (helical) span residues 12–32 (YWTI…GTWA) and 53–73 (IGLI…WVLI). Residues 114–164 (VWCSNCQSLKVGRTKHSSHQGHCVPRFDHYCVWLGAVIGFKNYRLFVQFVF) enclose the DHHC domain. Cys144 acts as the S-palmitoyl cysteine intermediate in catalysis. The next 2 helical transmembrane spans lie at 159–179 (FVQF…TISV) and 195–215 (LIVL…LFVS).

This sequence belongs to the DHHC palmitoyltransferase family. PFA5 subfamily.

Its subcellular location is the membrane. It catalyses the reaction L-cysteinyl-[protein] + hexadecanoyl-CoA = S-hexadecanoyl-L-cysteinyl-[protein] + CoA. This Candida glabrata (strain ATCC 2001 / BCRC 20586 / JCM 3761 / NBRC 0622 / NRRL Y-65 / CBS 138) (Yeast) protein is Palmitoyltransferase PFA5 (PFA5).